Consider the following 263-residue polypeptide: Protein M1425_2021 (263 aa).

The protein belongs to the CinA family.

The sequence is that of Protein M1425_2021 from Saccharolobus islandicus (strain M.14.25 / Kamchatka #1) (Sulfolobus islandicus).